The sequence spans 528 residues: Na(+)/H(+) antiporter NhaB (528 aa).

The next 11 membrane-spanning stretches (helical) occupy residues 23 to 43 (VAII…DPFV), 45 to 65 (GWLL…CYPL), 90 to 110 (LVAN…IYFM), 136 to 156 (CFAA…AVVI), 204 to 224 (LLMH…VGEP), 242 to 262 (IRMA…CAIV), 305 to 325 (GLIA…VGLI), 350 to 370 (EEAL…AVII), 392 to 412 (LALF…VFVG), 450 to 470 (ATPN…APLI), and 479 to 499 (IMAL…IMFF).

This sequence belongs to the NhaB Na(+)/H(+) (TC 2.A.34) antiporter family.

The protein resides in the cell inner membrane. It carries out the reaction 2 Na(+)(in) + 3 H(+)(out) = 2 Na(+)(out) + 3 H(+)(in). Na(+)/H(+) antiporter that extrudes sodium in exchange for external protons. The polypeptide is Na(+)/H(+) antiporter NhaB (Vibrio campbellii (strain ATCC BAA-1116)).